Reading from the N-terminus, the 408-residue chain is MVRVRAVVMARDDSSGGWLPVGGGGLSQVSVCRVRGARPEGGARQGHYVIHGERLRDQKTTLECTLRPGLVYNKVNPIFHHWSLGDCKFGLTFQSPAEADEFQKSLLAALAALSRGSLTPSSSSSSSSPSQDTAETPCPLTSHVDSDSSSSHSRQETPPTAPIATVESAAAFPLATRPQRRRSSAQSYPPLLPFTGIPEPSESLAGAGSQGWGSRGYEDYRRSGPPPPPLALSTCVVRFAKTGALRGAALGPPVSLPAPLTEAAPPAPPARPPPGPGPTPAPAKASPEAEEAARCVHCRALFRRRADGRGGRCAEAPDPGRLLVRRLSCLWCAESLLYHCLSDAEGDFSDPCACEPGHPRPAARWAALAALSLAVPCLCCYAPLRACHWVAARCGCAGCGGRHEEAAR.

Residues 1–113 (MVRVRAVVMA…KSLLAALAAL (113 aa)) enclose the WH1 domain. The tract at residues 118–226 (LTPSSSSSSS…YEDYRRSGPP (109 aa)) is disordered. Low complexity predominate over residues 120-130 (PSSSSSSSSPS). Residues 192–242 (LPFTGIPEPSESLAGAGSQGWGSRGYEDYRRSGPPPPPLALSTCVVRFAKT) enclose the KBD domain. Position 238 is an asymmetric dimethylarginine (Arg238). Arg246 is subject to Omega-N-methylarginine. The interval 256–286 (LPAPLTEAAPPAPPARPPPGPGPTPAPAKAS) is disordered. Residues 265-281 (PPAPPARPPPGPGPTPA) are compositionally biased toward pro residues. Residues 294 to 405 (RCVHCRALFR…CAGCGGRHEE (112 aa)) form the SPR domain.

In terms of assembly, interacts with palmitoyltransferase ZDHHC17/HIP14; the interaction leads to palmitoylation of SPRED3. Post-translationally, phosphorylated on tyrosine. Palmitoylated by ZDHHC17/HIP14. In terms of processing, ubiquitinated. Brain specific.

The protein localises to the cell membrane. Functionally, tyrosine kinase substrate that inhibits growth-factor-mediated activation of MAP kinase. Inhibits fibroblast growth factor (FGF)-induced retinal lens fiber differentiation, probably by inhibiting FGF-mediated phosphorylation of ERK1/2. Inhibits TGFB-induced epithelial-to-mesenchymal transition in lens epithelial cells. The protein is Sprouty-related, EVH1 domain-containing protein 3 (Spred3) of Mus musculus (Mouse).